The following is a 727-amino-acid chain: MLRIPIKRALIGLSNSPKGYVRTTGTAASNLIEVFVDGQSVMVEPGTTVLQACEKVGMQIPRFCYHERLSVAGNCRMCLVEIEKAPKVVAACAMPVMKGWNILTNSEKSKKAREGVMEFLLANHPLDCPICDQGGECDLQDQSMMFGSDRSRFLEGKRAVEDKNIGPLVKTIMTRCIQCTRCIRFASEIAGVDDLGTTGRGNDMQVGTYIEKMFMSELSGNVIDICPVGALTSKPYAFTARPWETRKTESIDVMDAVGSNIVVSTRTGEVMRILPRMHEDINEEWISDKTRFAYDGLKRQRLTEPMVRNEKGLLTYTSWEDALSRVAGMLQNFEGNAVAAIAGGLVDAEALVALKDLLNKVDSDNLCTEEIFPTEGAGTDLRSNYLLNTTIAGVEEADVVLLVGTNPRFEAPLFNARIRKSWLHNDLKVALIGSPVDLTYRYDHLGDSPKILQDIASGRHSFCEVLKDAKKPMVVLGSSALQRDDGAAILVAVSNMVQKIRVTTGVAAEWKVMNILHRIASQVAALDLGYKPGVEAIRKNPPKMLFLLGADGGCITRQDLPKDCFIVYQGHHGDVGAPMADVILPGAAYTEKSATYVNTEGRAQQTKVAVTPPGLAREDWKIIRALSEIAGITLPYDTLDQVRNRLEEVSPNLVRYDDIEETNYFQQASELAKLVNQEVLADPLVPPQLTIKDFYMTDSISRASQTMAKCVKAVTEGAQAVEEPSIC.

A mitochondrion-targeting transit peptide spans 1–23; sequence MLRIPIKRALIGLSNSPKGYVRT. Residues 30–108 enclose the 2Fe-2S ferredoxin-type domain; it reads NLIEVFVDGQ…GWNILTNSEK (79 aa). Positions 64, 75, and 78 each coordinate [2Fe-2S] cluster. At Lys84 the chain carries N6-acetyllysine. Cys92 serves as a coordination point for [2Fe-2S] cluster. The 40-residue stretch at 108 to 147 folds into the 4Fe-4S His(Cys)3-ligated-type domain; it reads KSKKAREGVMEFLLANHPLDCPICDQGGECDLQDQSMMFG. The [4Fe-4S] cluster site is built by His124, Cys128, Cys131, Cys137, Cys176, Cys179, Cys182, and Cys226. The 4Fe-4S Mo/W bis-MGD-type domain occupies 245-301; it reads TRKTESIDVMDAVGSNIVVSTRTGEVMRILPRMHEDINEEWISDKTRFAYDGLKRQR. Position 461 is a phosphoserine (Ser461). N6-acetyllysine is present on residues Lys467, Lys499, and Lys709.

It belongs to the complex I 75 kDa subunit family. In terms of assembly, core subunit of respiratory chain NADH dehydrogenase (Complex I) which is composed of 45 different subunits. This is the largest subunit of complex I and it is a component of the iron-sulfur (IP) fragment of the enzyme. Complex I associates with ubiquinol-cytochrome reductase complex (Complex III) to form supercomplexes. In astrocytes, less complex I is assembled into supercomplexes as compared to neurons. Interacts with MDM2. Interacts with AKAP1. Requires [2Fe-2S] cluster as cofactor. [4Fe-4S] cluster serves as cofactor. Acetylation of Lys-84 is observed in liver mitochondria from fasted mice but not from fed mice. In terms of tissue distribution, brain. More abundant in neurons than in astrocytes (at protein level).

Its subcellular location is the mitochondrion inner membrane. It catalyses the reaction a ubiquinone + NADH + 5 H(+)(in) = a ubiquinol + NAD(+) + 4 H(+)(out). Its function is as follows. Core subunit of the mitochondrial membrane respiratory chain NADH dehydrogenase (Complex I) which catalyzes electron transfer from NADH through the respiratory chain, using ubiquinone as an electron acceptor. Essential for catalysing the entry and efficient transfer of electrons within complex I. Plays a key role in the assembly and stability of complex I and participates in the association of complex I with ubiquinol-cytochrome reductase complex (Complex III) to form supercomplexes. This chain is NADH-ubiquinone oxidoreductase 75 kDa subunit, mitochondrial (Ndufs1), found in Mus musculus (Mouse).